The following is a 76-amino-acid chain: Small proline-rich protein 2I (76 aa).

3 tandem repeats follow at residues 21–29, 30–38, and 39–47. The segment at 21-47 is 3 X 9 AA approximate tandem repeats; it reads KKCPEPCPPPQCPEPCPPPKCPEPCPE. The span at 40 to 53 shows a compositional bias: pro residues; it reads KCPEPCPESCPPPS. The interval 40–76 is disordered; sequence KCPEPCPESCPPPSYQQKCPPVQPPPPCQQKCPPKSK.

This sequence belongs to the cornifin (SPRR) family. In terms of tissue distribution, not expressed in uterus.

Its subcellular location is the cytoplasm. In terms of biological role, cross-linked envelope protein of keratinocytes. It is a keratinocyte protein that first appears in the cell cytosol, but ultimately becomes cross-linked to membrane proteins by transglutaminase. All that results in the formation of an insoluble envelope beneath the plasma membrane. The sequence is that of Small proline-rich protein 2I (Sprr2i) from Mus musculus (Mouse).